The following is a 326-amino-acid chain: Vomeronasal type-1 receptor 100 (326 aa).

Topologically, residues 1 to 32 (MSEFPFFSPQPLFSYMMNKNSRVHTDSNIRNT) are extracellular. A helical transmembrane segment spans residues 33 to 53 (FFTEIGIGILANSFLLLFHIF). The Cytoplasmic segment spans residues 54–70 (KFIRGQRSRLTDLPIGL). The chain crosses the membrane as a helical span at residues 71-91 (LSLIHLLMLLMGAFIAIDIFI). Over 92-104 (SWRGWDDIICKFL) the chain is Extracellular. Residues cysteine 101 and cysteine 188 are joined by a disulfide bond. A helical transmembrane segment spans residues 105–127 (VYLYRSFRGLSLCTTCMLSVLQA). At 128 to 149 (ITLSPRSSCLAKFKHKSPHHVS) the chain is on the cytoplasmic side. A helical transmembrane segment spans residues 150 to 170 (CAIISLSILYMFISSHLLVSI). Topologically, residues 171 to 209 (NATPNLTTNNFMQVTQSCYIIPLSYLMQSMFSTLLAIRD) are extracellular. The N-linked (GlcNAc...) asparagine glycan is linked to asparagine 175. Residues 210 to 230 (ISLISLMVLSTCYMVVLLCRH) form a helical membrane-spanning segment. At 231-254 (RNQIQHLQGTNLSPKASPEQRATQ) the chain is on the cytoplasmic side. Residues 255-275 (TILMLMTFFVLMSIFDSIVSC) form a helical membrane-spanning segment. Topologically, residues 276-285 (SRTMYLNDPT) are extracellular. A helical membrane pass occupies residues 286–306 (SYYIQIFVVYIYATVSPFVFM). Topologically, residues 307-326 (STEKHIVNFLKSMCVRVKNV) are cytoplasmic.

It belongs to the G-protein coupled receptor 1 family. Expressed in 1-4% of neurons of the vomeronasal organ. Only one pheromone receptor gene may be expressed in a particular neuron. Not expressed in the main olfactory epithelium.

The protein localises to the cell membrane. In terms of biological role, putative pheromone receptor implicated in the regulation of social as well as reproductive behavior. This Rattus norvegicus (Rat) protein is Vomeronasal type-1 receptor 100 (Vom1r100).